The sequence spans 185 residues: MAETAYVPRLRTEYDRHIRTQLTEKFGYANVMQVPKLDKVVLNMGVGEAVNDRKKAEQAAADLSLIAGQKAVITYSRVAISTFKLRENQPIGCKVTLRQARMYEFIDRLITVALPRVRDFRGLNPKSFDGRGNYSLGIKEHIIFPEIDFDKTGESWGMDITVCTTARTDDEARALLTAFNFPFRQ.

The protein belongs to the universal ribosomal protein uL5 family. In terms of assembly, part of the 50S ribosomal subunit; part of the 5S rRNA subcomplex. Contacts the 5S rRNA and the P site tRNA. Forms a bridge to the 30S subunit in the 70S ribosome. Post-translationally, both N-terminus methionine truncation and retention have been observed for this protein. May be methylated twice, on undetermined residues.

This is one of the proteins that bind and probably mediate the attachment of the 5S RNA into the large ribosomal subunit, where it forms part of the central protuberance. In the 70S ribosome it contacts protein S13 of the 30S subunit (bridge B1b), connecting the 2 subunits; this bridge is implicated in subunit movement. Contacts the P site tRNA; the 5S rRNA and some of its associated proteins might help stabilize positioning of ribosome-bound tRNAs. In Rhodopseudomonas palustris (strain ATCC BAA-98 / CGA009), this protein is Large ribosomal subunit protein uL5.